Reading from the N-terminus, the 300-residue chain is ATP-dependent (S)-NAD(P)H-hydrate dehydratase (300 aa).

Residues leucine 14 to aspartate 293 form the YjeF C-terminal domain. Residues glycine 114 and asparagine 167 to arginine 173 each bind (6S)-NADPHX. ATP is bound by residues lysine 198–aspartate 202 and glycine 219–glycine 228. Residue aspartate 229 coordinates (6S)-NADPHX.

This sequence belongs to the NnrD/CARKD family. Mg(2+) is required as a cofactor.

The catalysed reaction is (6S)-NADHX + ATP = ADP + phosphate + NADH + H(+). The enzyme catalyses (6S)-NADPHX + ATP = ADP + phosphate + NADPH + H(+). Catalyzes the dehydration of the S-form of NAD(P)HX at the expense of ATP, which is converted to ADP. Together with NAD(P)HX epimerase, which catalyzes the epimerization of the S- and R-forms, the enzyme allows the repair of both epimers of NAD(P)HX, a damaged form of NAD(P)H that is a result of enzymatic or heat-dependent hydration. This Drosophila pseudoobscura pseudoobscura (Fruit fly) protein is ATP-dependent (S)-NAD(P)H-hydrate dehydratase.